Consider the following 188-residue polypeptide: Pyridoxal 5'-phosphate synthase subunit PdxT (188 aa).

L-glutamine is bound at residue 46–48; sequence GES. The Nucleophile role is filled by cysteine 78. Residues arginine 105 and 134-135 contribute to the L-glutamine site; that span reads IR. Residues histidine 170 and glutamate 172 each act as charge relay system in the active site.

The protein belongs to the glutaminase PdxT/SNO family. In the presence of PdxS, forms a dodecamer of heterodimers. Only shows activity in the heterodimer.

It carries out the reaction aldehydo-D-ribose 5-phosphate + D-glyceraldehyde 3-phosphate + L-glutamine = pyridoxal 5'-phosphate + L-glutamate + phosphate + 3 H2O + H(+). The catalysed reaction is L-glutamine + H2O = L-glutamate + NH4(+). Its pathway is cofactor biosynthesis; pyridoxal 5'-phosphate biosynthesis. In terms of biological role, catalyzes the hydrolysis of glutamine to glutamate and ammonia as part of the biosynthesis of pyridoxal 5'-phosphate. The resulting ammonia molecule is channeled to the active site of PdxS. This chain is Pyridoxal 5'-phosphate synthase subunit PdxT, found in Thermotoga sp. (strain RQ2).